The following is a 503-amino-acid chain: ATP synthase subunit alpha (503 aa).

Residue 170-177 (GDRQTGKT) participates in ATP binding.

This sequence belongs to the ATPase alpha/beta chains family. As to quaternary structure, F-type ATPases have 2 components, CF(1) - the catalytic core - and CF(0) - the membrane proton channel. CF(1) has five subunits: alpha(3), beta(3), gamma(1), delta(1), epsilon(1). CF(0) has three main subunits: a(1), b(2) and c(9-12). The alpha and beta chains form an alternating ring which encloses part of the gamma chain. CF(1) is attached to CF(0) by a central stalk formed by the gamma and epsilon chains, while a peripheral stalk is formed by the delta and b chains.

It is found in the cell membrane. It catalyses the reaction ATP + H2O + 4 H(+)(in) = ADP + phosphate + 5 H(+)(out). Functionally, produces ATP from ADP in the presence of a proton gradient across the membrane. The alpha chain is a regulatory subunit. In Brevibacillus brevis (strain 47 / JCM 6285 / NBRC 100599), this protein is ATP synthase subunit alpha.